The chain runs to 506 residues: Probable alpha-L-arabinofuranosidase B (506 aa).

Residues 1 to 26 form the signal peptide; sequence MLLPRGFNRAVVTALGVVGTGTLVAA. Residues 27 to 343 are catalytic; it reads GPCDIYSSGG…ANIVAAKYAV (317 aa). Cystine bridges form between C29–C39, C89–C94, and C184–C185. D227 is a substrate binding site. The active-site Nucleophile is E229. N230 is a binding site for substrate. N285 is a glycosylation site (N-linked (GlcNAc...) asparagine). Substrate is bound at residue G304. D305 acts as the Proton donor in catalysis. The interval 344-506 is ABD; sequence APLTSGPSLT…VSWVVSTSFA (163 aa). Residue N375 is glycosylated (N-linked (GlcNAc...) asparagine). Residues C409 and C447 are joined by a disulfide bond. The substrate site is built by H424, F427, D443, H471, L476, and D496.

This sequence belongs to the glycosyl hydrolase 54 family.

The protein resides in the secreted. It carries out the reaction Hydrolysis of terminal non-reducing alpha-L-arabinofuranoside residues in alpha-L-arabinosides.. The protein operates within glycan metabolism; L-arabinan degradation. Alpha-L-arabinofuranosidase involved in the degradation of arabinoxylan, a major component of plant hemicellulose. Able to hydrolyze 1,5-, 1,3- and 1,2-alpha-linkages not only in L-arabinofuranosyl oligosaccharides, but also in polysaccharides containing terminal non-reducing L-arabinofuranoses in side chains, like L-arabinan, arabinogalactan and arabinoxylan. The polypeptide is Probable alpha-L-arabinofuranosidase B (abfB) (Aspergillus terreus (strain NIH 2624 / FGSC A1156)).